We begin with the raw amino-acid sequence, 158 residues long: Cyclic pyranopterin monophosphate synthase (158 aa).

Substrate-binding positions include 73 to 75 (LCH) and 110 to 111 (ME). Asp-125 is a catalytic residue.

The protein belongs to the MoaC family. In terms of assembly, homohexamer; trimer of dimers.

It carries out the reaction (8S)-3',8-cyclo-7,8-dihydroguanosine 5'-triphosphate = cyclic pyranopterin phosphate + diphosphate. The protein operates within cofactor biosynthesis; molybdopterin biosynthesis. In terms of biological role, catalyzes the conversion of (8S)-3',8-cyclo-7,8-dihydroguanosine 5'-triphosphate to cyclic pyranopterin monophosphate (cPMP). This is Cyclic pyranopterin monophosphate synthase from Ectopseudomonas mendocina (strain ymp) (Pseudomonas mendocina).